Reading from the N-terminus, the 404-residue chain is Keratin, type I cuticular Ha3-I (404 aa).

The segment at 1–56 (MSYSCGLPSLSCRTSCSSRPCVPPSCHGCTLPGACNIPANVSNCNWFCEGSFNGSE) is head. The region spanning 56 to 367 (EKETMQFLND…SLLESEDCKL (312 aa)) is the IF rod domain. Residues 57 to 91 (KETMQFLNDRLASYLEKVRQLERDNAELENLIRER) form a coil 1A region. The segment at 92 to 102 (SQQQEPLVCAS) is linker 1. The tract at residues 103 to 203 (YQSYFKTIEE…HEQEVNTLRC (101 aa)) is coil 1B. A linker 12 region spans residues 204 to 219 (QLGDRLNVEVDAAPTV). A coil 2 region spans residues 220–363 (DLNQVLNETR…NTYRSLLESE (144 aa)). The interval 364–404 (DCKLPSNPCATTNACDKSTGPCISNPCGLRARCGPCNTFGY) is tail.

Belongs to the intermediate filament family. In terms of tissue distribution, expressed in the hair follicles.

The protein is Keratin, type I cuticular Ha3-I (KRT33A) of Homo sapiens (Human).